The sequence spans 341 residues: Phenylalanine--tRNA ligase alpha subunit (341 aa).

Residue Glu-255 coordinates Mg(2+).

It belongs to the class-II aminoacyl-tRNA synthetase family. Phe-tRNA synthetase alpha subunit type 1 subfamily. As to quaternary structure, tetramer of two alpha and two beta subunits. The cofactor is Mg(2+).

It is found in the cytoplasm. It catalyses the reaction tRNA(Phe) + L-phenylalanine + ATP = L-phenylalanyl-tRNA(Phe) + AMP + diphosphate + H(+). This chain is Phenylalanine--tRNA ligase alpha subunit, found in Natranaerobius thermophilus (strain ATCC BAA-1301 / DSM 18059 / JW/NM-WN-LF).